The chain runs to 106 residues: Nucleoid-associated protein Nwi_0368 (106 aa).

It belongs to the YbaB/EbfC family. In terms of assembly, homodimer.

Its subcellular location is the cytoplasm. It is found in the nucleoid. In terms of biological role, binds to DNA and alters its conformation. May be involved in regulation of gene expression, nucleoid organization and DNA protection. This Nitrobacter winogradskyi (strain ATCC 25391 / DSM 10237 / CIP 104748 / NCIMB 11846 / Nb-255) protein is Nucleoid-associated protein Nwi_0368.